Here is a 696-residue protein sequence, read N- to C-terminus: Translation factor waclaw, mitochondrial (696 aa).

The transit peptide at 1–76 directs the protein to the mitochondrion; the sequence is MIVGYSVFFH…RNLSTTNQVK (76 aa). The region spanning 97–278 is the tr-type G domain; that stretch reads ERIRNFSIIA…RVIETVPPPQ (182 aa). Residues 106-113, 171-175, and 225-228 contribute to the GTP site; these read AHVDHGKS, DTPGH, and NKID.

It belongs to the TRAFAC class translation factor GTPase superfamily. Classic translation factor GTPase family. LepA subfamily.

It is found in the mitochondrion inner membrane. It catalyses the reaction GTP + H2O = GDP + phosphate + H(+). Its function is as follows. Promotes mitochondrial protein synthesis. May act as a fidelity factor of the translation reaction, by catalyzing a one-codon backward translocation of tRNAs on improperly translocated ribosomes. Binds to mitochondrial ribosomes in a GTP-dependent manner. This Drosophila melanogaster (Fruit fly) protein is Translation factor waclaw, mitochondrial.